The following is a 362-amino-acid chain: 3-isopropylmalate dehydrogenase (362 aa).

78–91 (GYKWDSLPPHQRPE) is an NAD(+) binding site. Positions 98, 108, 136, and 226 each coordinate substrate. Aspartate 226, aspartate 250, and aspartate 254 together coordinate Mg(2+). Residue 284–296 (GSAPDIAGLDKAN) coordinates NAD(+).

This sequence belongs to the isocitrate and isopropylmalate dehydrogenases family. LeuB type 1 subfamily. Homodimer. Mg(2+) serves as cofactor. It depends on Mn(2+) as a cofactor.

It is found in the cytoplasm. It carries out the reaction (2R,3S)-3-isopropylmalate + NAD(+) = 4-methyl-2-oxopentanoate + CO2 + NADH. It participates in amino-acid biosynthesis; L-leucine biosynthesis; L-leucine from 3-methyl-2-oxobutanoate: step 3/4. In terms of biological role, catalyzes the oxidation of 3-carboxy-2-hydroxy-4-methylpentanoate (3-isopropylmalate) to 3-carboxy-4-methyl-2-oxopentanoate. The product decarboxylates to 4-methyl-2 oxopentanoate. This is 3-isopropylmalate dehydrogenase from Trichormus variabilis (strain ATCC 29413 / PCC 7937) (Anabaena variabilis).